The chain runs to 593 residues: MLO-like protein 8 (593 aa).

Over 1 to 46 the chain is Extracellular; sequence MGIIDGSLLRRLICLCLWCLLGGGVTVVTAEDEKKVVHKQLNQTPT. The chain crosses the membrane as a helical span at residues 47–67; sequence WAVAAVCTFFIVVSVLLEKLL. Residues 68–92 are Cytoplasmic-facing; the sequence is HKVGKVLWDRHKTALLDALEKIKAE. Residues 93–113 traverse the membrane as a helical segment; that stretch reads LMVLGFISLLLTFGQTYILDI. Residues 114–181 are Extracellular-facing; the sequence is CIPSHVARTM…ISAEALHQLH (68 aa). Residues 182 to 202 traverse the membrane as a helical segment; that stretch reads ILIFFLAIFHVLYSFLTMMLG. Topologically, residues 203 to 304 are cytoplasmic; that stretch reads RLKIRGWKHW…IKRSLEDDFK (102 aa). A helical membrane pass occupies residues 305–325; sequence VVVGVSPVLWGSFVLFLLLNI. Position 326 (Asp326) is a topological domain, extracellular. Residues 327-347 form a helical membrane-spanning segment; it reads GFKMMFIGTAIPVIIILAVGT. Residues 348 to 393 lie on the Cytoplasmic side of the membrane; the sequence is KLQAIMTRMALGITDRHAVVQGMPLVQGNDEYFWFGRPHLILHLMH. A helical membrane pass occupies residues 394–414; it reads FALFQNAFQITYFFWIWYSFG. Residues 415–430 lie on the Extracellular side of the membrane; the sequence is SDSCYHPNFKIALVKV. Residues 431 to 451 form a helical membrane-spanning segment; it reads AIALGVLCLCSYITLPLYALV. The Cytoplasmic portion of the chain corresponds to 452–593; it reads TQMGSRMKKS…APSNESSQDR (142 aa). Positions 465–486 are calmodulin-binding; the sequence is EQTSKALKKWRMAVKKKKGVKA. The interval 481–593 is disordered; sequence KKGVKATTKR…APSNESSQDR (113 aa). A compositionally biased stretch (low complexity) spans 489–512; it reads KRLGGDGSASPTASTVRSTSSVRS. Residues 528–539 show a composition bias toward acidic residues; sequence LDPETSDLDTDN. Positions 567–579 are enriched in basic and acidic residues; the sequence is TSRDTETDSKEFS.

This sequence belongs to the MLO family.

It is found in the membrane. Its function is as follows. May be involved in modulation of pathogen defense and leaf cell death. Activity seems to be regulated by Ca(2+)-dependent calmodulin binding and seems not to require heterotrimeric G proteins. The protein is MLO-like protein 8 (MLO8) of Arabidopsis thaliana (Mouse-ear cress).